We begin with the raw amino-acid sequence, 422 residues long: Methylaspartate ammonia-lyase (422 aa).

Residue Q175 participates in (2S,3S)-3-methyl-L-aspartate binding. Residues D239, E276, and D310 each contribute to the Mg(2+) site. Q332 is a (2S,3S)-3-methyl-L-aspartate binding site. The active-site Proton acceptor is the K334. 363-364 (TC) contacts (2S,3S)-3-methyl-L-aspartate.

The protein belongs to the methylaspartate ammonia-lyase family. As to quaternary structure, homodimer. Requires Mg(2+) as cofactor.

The enzyme catalyses (2S,3S)-3-methyl-L-aspartate = mesaconate + NH4(+). Its pathway is amino-acid degradation; L-glutamate degradation via mesaconate pathway; acetate and pyruvate from L-glutamate: step 2/4. Involved in the methylaspartate cycle. Catalyzes the formation of the alpha,beta-unsaturated bond by the reversible anti elimination of ammonia from L-threo-beta-methylaspartate (L-threo-(2S,3S)-3-methylaspartate) to give mesaconate. The sequence is that of Methylaspartate ammonia-lyase (mal) from Haloarcula marismortui (strain ATCC 43049 / DSM 3752 / JCM 8966 / VKM B-1809) (Halobacterium marismortui).